The following is a 50-amino-acid chain: Sperm protamine P1 (50 aa).

It belongs to the protamine P1 family. As to expression, testis.

Its subcellular location is the nucleus. The protein localises to the chromosome. In terms of biological role, protamines substitute for histones in the chromatin of sperm during the haploid phase of spermatogenesis. They compact sperm DNA into a highly condensed, stable and inactive complex. This is Sperm protamine P1 (PRM1) from Trachypithecus vetulus (Purple-faced langur).